A 178-amino-acid chain; its full sequence is Membrane-spanning protein YciB (178 aa).

Helical transmembrane passes span 22-42 (IFIASFSLMIASLFTFIITSI), 52-72 (LINLIFVIVFGFLTLFYHNSS), 76-96 (WKVTIIYFLISIVFLINYLFI), 121-141 (LFWSIFFLICAVSNTYIILYF), and 151-171 (IFGLTILTLIAVIINGFYIYF).

Belongs to the YciB family.

It localises to the cell membrane. Plays a role in cell envelope biogenesis, maintenance of cell envelope integrity and membrane homeostasis. This is Membrane-spanning protein YciB from Buchnera aphidicola subsp. Baizongia pistaciae (strain Bp).